A 317-amino-acid polypeptide reads, in one-letter code: Polysulfide reductase chain C (317 aa).

Transmembrane regions (helical) follow at residues 20 to 40 (IAVY…AIII), 54 to 75 (IIKA…LLIF), 98 to 118 (LGVL…LGVF), 147 to 167 (IVTF…LSAM), 182 to 202 (FLAS…LLFF), 221 to 237 (VILF…VGMY), 259 to 279 (LFWL…NVAL), and 289 to 309 (FVML…FYIL).

It belongs to the NrfD family. As to quaternary structure, functional polysulfide reductase is made up of three different (A, B, and C) subunits.

It localises to the cell inner membrane. Its function is as follows. Could possibly serve as the membrane anchor of the enzyme. Functionally, component of the phosphorylative electron transport system with polysulfide as the terminal acceptor. The polypeptide is Polysulfide reductase chain C (psrC) (Wolinella succinogenes (strain ATCC 29543 / DSM 1740 / CCUG 13145 / JCM 31913 / LMG 7466 / NCTC 11488 / FDC 602W) (Vibrio succinogenes)).